Reading from the N-terminus, the 170-residue chain is Metalloproteinase inhibitor 4 (170 aa).

Residues 1–105 enclose the NTR domain; it reads ISSEKVVPAS…SLNHHYHLNC (105 aa). 2 involved in metalloproteinase-binding regions span residues 6 to 9 and 48 to 49; these read VVPA and SS. Cystine bridges form between C107–C154, C112–C117, and C125–C146.

It belongs to the protease inhibitor I35 (TIMP) family.

It is found in the secreted. Its function is as follows. Complexes with metalloproteinases (such as collagenases) and irreversibly inactivates them by binding to their catalytic zinc cofactor. In Oryctolagus cuniculus (Rabbit), this protein is Metalloproteinase inhibitor 4 (TIMP4).